Here is a 276-residue protein sequence, read N- to C-terminus: Sulfur carrier protein FdhD (276 aa).

Catalysis depends on cysteine 122, which acts as the Cysteine persulfide intermediate. 259-264 is a binding site for Mo-bis(molybdopterin guanine dinucleotide); it reads FCKPGK.

It belongs to the FdhD family.

It localises to the cytoplasm. Its function is as follows. Required for formate dehydrogenase (FDH) activity. Acts as a sulfur carrier protein that transfers sulfur from IscS to the molybdenum cofactor prior to its insertion into FDH. The polypeptide is Sulfur carrier protein FdhD (Photorhabdus laumondii subsp. laumondii (strain DSM 15139 / CIP 105565 / TT01) (Photorhabdus luminescens subsp. laumondii)).